The primary structure comprises 450 residues: Glucose-6-phosphate isomerase (450 aa).

Thr38 carries the phosphothreonine modification. The active-site Proton donor is Glu290. Active-site residues include His311 and Lys425.

Belongs to the GPI family.

It localises to the cytoplasm. The enzyme catalyses alpha-D-glucose 6-phosphate = beta-D-fructose 6-phosphate. It functions in the pathway carbohydrate biosynthesis; gluconeogenesis. The protein operates within carbohydrate degradation; glycolysis; D-glyceraldehyde 3-phosphate and glycerone phosphate from D-glucose: step 2/4. Catalyzes the reversible isomerization of glucose-6-phosphate to fructose-6-phosphate. This is Glucose-6-phosphate isomerase from Bacillus licheniformis (strain ATCC 14580 / DSM 13 / JCM 2505 / CCUG 7422 / NBRC 12200 / NCIMB 9375 / NCTC 10341 / NRRL NRS-1264 / Gibson 46).